A 137-amino-acid polypeptide reads, in one-letter code: Pro-corazonin (137 aa).

A signal peptide spans 1–20 (MKHVFSTSLIVSLFVIFTDA). The residue at position 21 (Gln21) is a Pyrrolidone carboxylic acid. Asn31 is subject to Asparagine amide. A propeptide spanning residues 68–137 (FLKSPCDVRL…RLLNDGMHRL (70 aa)) is cleaved from the precursor.

The protein belongs to the corazonin family.

It is found in the secreted. In terms of biological role, cardioactive peptide. Corazonin is probably involved in the physiological regulation of the heart beat. This Aedes aegypti (Yellowfever mosquito) protein is Pro-corazonin.